The following is a 343-amino-acid chain: MRAPAFWWRRPGVASALLSPIGAVVGAVALARMGKAGGRVDAPVLCIGNPTVGGAGKTPTAIALLDRLTARGATPFALLRGHGGSAPMPLRVDPAIHGADAVGDEALLLARHAPTIVAGGARLAGAAMAVETGASHIVMDDGFQNPSLHKDVSVLVVDGMVGVGNACVTPAGPLRAPLLPQLARADAVLVVGDGSAGDRVAAEATQAGCTVLRGWLVPDPAAVAALHGIPLIAFAGIGRPEKFFATLEREGLALLARHAFADHHPFRPAEIARLVEAARAQGARLVTTEKDRARLTGPAFAGPEFSGVLDAIAPLPVTLALDAPHALDALVDRAEARFQARRT.

51–58 (TVGGAGKT) is an ATP binding site.

The protein belongs to the LpxK family.

The catalysed reaction is a lipid A disaccharide + ATP = a lipid IVA + ADP + H(+). It participates in glycolipid biosynthesis; lipid IV(A) biosynthesis; lipid IV(A) from (3R)-3-hydroxytetradecanoyl-[acyl-carrier-protein] and UDP-N-acetyl-alpha-D-glucosamine: step 6/6. In terms of biological role, transfers the gamma-phosphate of ATP to the 4'-position of a tetraacyldisaccharide 1-phosphate intermediate (termed DS-1-P) to form tetraacyldisaccharide 1,4'-bis-phosphate (lipid IVA). The sequence is that of Tetraacyldisaccharide 4'-kinase from Xanthobacter autotrophicus (strain ATCC BAA-1158 / Py2).